A 263-amino-acid chain; its full sequence is uncharacterized protein (263 aa).

A signal peptide spans 1–22 (MEYLKRLALLISVIILTIFIMG). Residue Cys23 is the site of N-palmitoyl cysteine attachment. Cys23 carries the S-diacylglycerol cysteine lipid modification.

The protein belongs to the staphylococcal tandem lipoprotein family.

It localises to the cell membrane. This is an uncharacterized protein from Staphylococcus aureus (strain COL).